The sequence spans 121 residues: Peptidyl-tRNA hydrolase (121 aa).

Belongs to the PTH2 family.

The protein resides in the cytoplasm. The enzyme catalyses an N-acyl-L-alpha-aminoacyl-tRNA + H2O = an N-acyl-L-amino acid + a tRNA + H(+). The natural substrate for this enzyme may be peptidyl-tRNAs which drop off the ribosome during protein synthesis. This is Peptidyl-tRNA hydrolase from Staphylothermus marinus (strain ATCC 43588 / DSM 3639 / JCM 9404 / F1).